The following is a 189-amino-acid chain: MTKSNETERMEESEETHSSDIRSASESDHASGSDHTESADEIPTADAEQGELEQLEKLKDDLARERAAFHNFRMARAKQAEIERDRTRSEVIRVILPVLDDFARIEKHSTLDDPFKAVVTKLRSAMEKIGLTAFGNPGDPFNPELHEALFQNPSPDVQTETVQDVIEAGYCLGETVIRAAKVVVQVPNG.

The span at 1-38 (MTKSNETERMEESEETHSSDIRSASESDHASGSDHTES) shows a compositional bias: basic and acidic residues. The interval 1-54 (MTKSNETERMEESEETHSSDIRSASESDHASGSDHTESADEIPTADAEQGELEQ) is disordered.

This sequence belongs to the GrpE family. As to quaternary structure, homodimer.

Its subcellular location is the cytoplasm. Participates actively in the response to hyperosmotic and heat shock by preventing the aggregation of stress-denatured proteins, in association with DnaK and GrpE. It is the nucleotide exchange factor for DnaK and may function as a thermosensor. Unfolded proteins bind initially to DnaJ; upon interaction with the DnaJ-bound protein, DnaK hydrolyzes its bound ATP, resulting in the formation of a stable complex. GrpE releases ADP from DnaK; ATP binding to DnaK triggers the release of the substrate protein, thus completing the reaction cycle. Several rounds of ATP-dependent interactions between DnaJ, DnaK and GrpE are required for fully efficient folding. The polypeptide is Protein GrpE (Tropheryma whipplei (strain Twist) (Whipple's bacillus)).